A 159-amino-acid polypeptide reads, in one-letter code: ATP synthase subunit b 2 (159 aa).

The chain crosses the membrane as a helical span at residues 1–21 (MDATFWALVALIIFVGILLYM).

This sequence belongs to the ATPase B chain family. F-type ATPases have 2 components, F(1) - the catalytic core - and F(0) - the membrane proton channel. F(1) has five subunits: alpha(3), beta(3), gamma(1), delta(1), epsilon(1). F(0) has three main subunits: a(1), b(2) and c(10-14). The alpha and beta chains form an alternating ring which encloses part of the gamma chain. F(1) is attached to F(0) by a central stalk formed by the gamma and epsilon chains, while a peripheral stalk is formed by the delta and b chains.

It is found in the cell inner membrane. Its function is as follows. F(1)F(0) ATP synthase produces ATP from ADP in the presence of a proton or sodium gradient. F-type ATPases consist of two structural domains, F(1) containing the extramembraneous catalytic core and F(0) containing the membrane proton channel, linked together by a central stalk and a peripheral stalk. During catalysis, ATP synthesis in the catalytic domain of F(1) is coupled via a rotary mechanism of the central stalk subunits to proton translocation. Component of the F(0) channel, it forms part of the peripheral stalk, linking F(1) to F(0). The polypeptide is ATP synthase subunit b 2 (Chelativorans sp. (strain BNC1)).